The following is a 215-amino-acid chain: 3-isopropylmalate dehydratase small subunit (215 aa).

The protein belongs to the LeuD family. LeuD type 1 subfamily. As to quaternary structure, heterodimer of LeuC and LeuD.

It carries out the reaction (2R,3S)-3-isopropylmalate = (2S)-2-isopropylmalate. It functions in the pathway amino-acid biosynthesis; L-leucine biosynthesis; L-leucine from 3-methyl-2-oxobutanoate: step 2/4. Its function is as follows. Catalyzes the isomerization between 2-isopropylmalate and 3-isopropylmalate, via the formation of 2-isopropylmaleate. This is 3-isopropylmalate dehydratase small subunit from Stutzerimonas stutzeri (strain A1501) (Pseudomonas stutzeri).